The following is a 281-amino-acid chain: Nuclear receptor-interacting protein 2 (281 aa).

Residues 18–85 (ESCSTGQRQA…RAHLSQQRRL (68 aa)) form a disordered region. Over residues 36-47 (TPPPSSPWPTPP) the composition is skewed to pro residues. Positions 55-78 (QEARRDEGEARTRGQEAQLRDRAH) are enriched in basic and acidic residues. The LXXLL motif signature appears at 244 to 248 (LQTLL).

In terms of assembly, interacts with NR1F2, RARA and THRB in a ligand-dependent manner.

Its subcellular location is the nucleus. Down-regulates transcriptional activation by nuclear receptors such as NR1F2. This Homo sapiens (Human) protein is Nuclear receptor-interacting protein 2 (NRIP2).